A 360-amino-acid chain; its full sequence is Phospho-N-acetylmuramoyl-pentapeptide-transferase (360 aa).

10 consecutive transmembrane segments (helical) span residues 27–47 (IVSL…MIAF), 71–91 (TPTM…LLWV), 94–114 (NNPY…VGFV), 132–152 (WKYF…YSFG), 168–188 (VMPQ…VGTS), 199–219 (GLAI…AWAT), 236–256 (AGEL…FLWF), 263–283 (VFMG…IAVL), 288–308 (FLLV…ILQV), and 338–358 (VIVR…ATLK).

It belongs to the glycosyltransferase 4 family. MraY subfamily. It depends on Mg(2+) as a cofactor.

It localises to the cell inner membrane. It carries out the reaction UDP-N-acetyl-alpha-D-muramoyl-L-alanyl-gamma-D-glutamyl-meso-2,6-diaminopimeloyl-D-alanyl-D-alanine + di-trans,octa-cis-undecaprenyl phosphate = di-trans,octa-cis-undecaprenyl diphospho-N-acetyl-alpha-D-muramoyl-L-alanyl-D-glutamyl-meso-2,6-diaminopimeloyl-D-alanyl-D-alanine + UMP. It participates in cell wall biogenesis; peptidoglycan biosynthesis. Catalyzes the initial step of the lipid cycle reactions in the biosynthesis of the cell wall peptidoglycan: transfers peptidoglycan precursor phospho-MurNAc-pentapeptide from UDP-MurNAc-pentapeptide onto the lipid carrier undecaprenyl phosphate, yielding undecaprenyl-pyrophosphoryl-MurNAc-pentapeptide, known as lipid I. This is Phospho-N-acetylmuramoyl-pentapeptide-transferase from Photorhabdus laumondii subsp. laumondii (strain DSM 15139 / CIP 105565 / TT01) (Photorhabdus luminescens subsp. laumondii).